The chain runs to 322 residues: Nuclease 1, mitochondrial (322 aa).

His-142 (proton acceptor) is an active-site residue. Asn-174 lines the Mg(2+) pocket.

It belongs to the DNA/RNA non-specific endonuclease family. In terms of assembly, homodimer. The cofactor is Mn(2+). It depends on Mg(2+) as a cofactor.

The protein resides in the mitochondrion inner membrane. Its function is as follows. This enzyme has both RNase and DNase activity. It degrades single-stranded DNA and RNA. This is Nuclease 1, mitochondrial (pnu1) from Schizosaccharomyces pombe (strain 972 / ATCC 24843) (Fission yeast).